The primary structure comprises 92 residues: Sugar fermentation stimulation protein B (92 aa).

Residues 50–69 constitute a DNA-binding region (H-T-H motif); that stretch reads EMIIAKALGTDPWVIWPSRY.

It belongs to the ner transcriptional regulatory family.

Functionally, this protein is involved in positive regulation of the metabolism of sugars. The protein is Sugar fermentation stimulation protein B (sfsB) of Escherichia coli O157:H7.